The chain runs to 232 residues: Ribonuclease 3 (232 aa).

Positions 6–133 (FNDIENRLGV…VIAAVYLDKG (128 aa)) constitute an RNase III domain. Glutamate 46 contributes to the Mg(2+) binding site. The active site involves aspartate 50. Mg(2+) contacts are provided by aspartate 119 and glutamate 122. Residue glutamate 122 is part of the active site. In terms of domain architecture, DRBM spans 160–229 (DFKTKLQELL…AKEALKRLEK (70 aa)).

Belongs to the ribonuclease III family. As to quaternary structure, homodimer. Mg(2+) serves as cofactor.

It localises to the cytoplasm. The catalysed reaction is Endonucleolytic cleavage to 5'-phosphomonoester.. In terms of biological role, digests double-stranded RNA. Involved in the processing of primary rRNA transcript to yield the immediate precursors to the large and small rRNAs (23S and 16S). Processes some mRNAs, and tRNAs when they are encoded in the rRNA operon. Processes pre-crRNA and tracrRNA of type II CRISPR loci if present in the organism. This Clostridium botulinum (strain Eklund 17B / Type B) protein is Ribonuclease 3.